An 828-amino-acid chain; its full sequence is DNA gyrase subunit A (828 aa).

Residues 38-501 (LPDARDGLKP…SYESIDTEDL (464 aa)) form the Topo IIA-type catalytic domain. The active-site O-(5'-phospho-DNA)-tyrosine intermediate is the Tyr126. The short motif at 528 to 534 (QNRGGKG) is the GyrA-box element.

It belongs to the type II topoisomerase GyrA/ParC subunit family. As to quaternary structure, heterotetramer, composed of two GyrA and two GyrB chains. In the heterotetramer, GyrA contains the active site tyrosine that forms a transient covalent intermediate with DNA, while GyrB binds cofactors and catalyzes ATP hydrolysis.

The protein resides in the cytoplasm. The enzyme catalyses ATP-dependent breakage, passage and rejoining of double-stranded DNA.. A type II topoisomerase that negatively supercoils closed circular double-stranded (ds) DNA in an ATP-dependent manner to modulate DNA topology and maintain chromosomes in an underwound state. Negative supercoiling favors strand separation, and DNA replication, transcription, recombination and repair, all of which involve strand separation. Also able to catalyze the interconversion of other topological isomers of dsDNA rings, including catenanes and knotted rings. Type II topoisomerases break and join 2 DNA strands simultaneously in an ATP-dependent manner. This chain is DNA gyrase subunit A, found in Helicobacter pylori (strain J99 / ATCC 700824) (Campylobacter pylori J99).